The primary structure comprises 246 residues: UDP-N-acetyl-D-mannosaminuronic acid transferase (246 aa).

The protein belongs to the glycosyltransferase 26 family.

It carries out the reaction UDP-N-acetyl-alpha-D-mannosaminouronate + N-acetyl-alpha-D-glucosaminyl-di-trans,octa-cis-undecaprenyl diphosphate = beta-D-ManNAcA-(1-&gt;4)-alpha-D-GlcNAc-di-trans,octa-cis-undecaprenyl diphosphate + UDP + H(+). It participates in bacterial outer membrane biogenesis; enterobacterial common antigen biosynthesis. In terms of biological role, catalyzes the synthesis of Und-PP-GlcNAc-ManNAcA (Lipid II), the second lipid-linked intermediate involved in enterobacterial common antigen (ECA) synthesis. The sequence is that of UDP-N-acetyl-D-mannosaminuronic acid transferase from Serratia proteamaculans (strain 568).